A 291-amino-acid chain; its full sequence is 4-diphosphocytidyl-2-C-methyl-D-erythritol kinase (291 aa).

Lysine 14 is a catalytic residue. 96–106 is an ATP binding site; sequence PFGAGLGGGSS. Residue aspartate 138 is part of the active site.

This sequence belongs to the GHMP kinase family. IspE subfamily.

The enzyme catalyses 4-CDP-2-C-methyl-D-erythritol + ATP = 4-CDP-2-C-methyl-D-erythritol 2-phosphate + ADP + H(+). The protein operates within isoprenoid biosynthesis; isopentenyl diphosphate biosynthesis via DXP pathway; isopentenyl diphosphate from 1-deoxy-D-xylulose 5-phosphate: step 3/6. Functionally, catalyzes the phosphorylation of the position 2 hydroxy group of 4-diphosphocytidyl-2C-methyl-D-erythritol. The protein is 4-diphosphocytidyl-2-C-methyl-D-erythritol kinase of Chlorobium phaeovibrioides (strain DSM 265 / 1930) (Prosthecochloris vibrioformis (strain DSM 265)).